An 85-amino-acid chain; its full sequence is Sodium channel neurotoxin MeuNaTxalpha-1 (85 aa).

A signal peptide spans 1-19 (MNSLVMISLALLVMTGVES). In terms of domain architecture, LCN-type CS-alpha/beta spans 21–83 (RDGYIADDKN…VPIKVSGKCN (63 aa)). The specificity module, loop 1 stretch occupies residues 27 to 31 (DDKNC). Cystine bridges form between cysteine 31–cysteine 82, cysteine 35–cysteine 55, cysteine 41–cysteine 65, and cysteine 45–cysteine 67. 2 specificity module, loop regions span residues 58 to 62 (AGQYG) and 75 to 83 (PIKVSGKCN). An Asparagine amide modification is found at asparagine 83.

Belongs to the long (4 C-C) scorpion toxin superfamily. Sodium channel inhibitor family. Alpha subfamily. C-terminal amidation does not appear to play an important role in activity, since the non-amidated recombinant toxin and the native toxin (which is amidated) show similar activities on all sodium channels tested. As to expression, expressed by the venom gland.

Its subcellular location is the secreted. Its function is as follows. Alpha toxins bind voltage-independently at site-3 of sodium channels (Nav) and inhibit the inactivation of the activated channels, thereby blocking neuronal transmission. This toxin inhibits inactivation of Nav1.6/SCN8A (EC(50)=3.1 uM) and drosophila DmNav1 (EC(50)=1.17 uM). It also shows a weak inhibition of inactivation on Nav1.2/SCN2A Nav1.3/SCN3A, and Nav1.7/SCN9A. The toxin (1 uM) does not significantly shift the midpoint of activation at the two channels, but induces a significant depolarizing shift in the V(1/2) of inactivation of the channels. The toxin has also been shown to dose-dependently stimulates intracellular signaling in DRG neurons through activation of two kinases (type II protein kinase A (PKA-II) and MAP kinases 1/3 (MAPK1/MAPK3)). Nav1.2/SCN2A is strongly suggested to be the target channel predominantly involved in this activation. In vivo, the toxin induces a dose-dependent thermal hyperalgesia lasting 30-45 minutes. The chain is Sodium channel neurotoxin MeuNaTxalpha-1 from Mesobuthus eupeus (Lesser Asian scorpion).